A 384-amino-acid polypeptide reads, in one-letter code: 8-amino-7-oxononanoate synthase (384 aa).

Arg21 is a substrate binding site. 108 to 109 (GY) provides a ligand contact to pyridoxal 5'-phosphate. A substrate-binding site is contributed by His133. Pyridoxal 5'-phosphate is bound by residues Ser179, His207, and Thr233. At Lys236 the chain carries N6-(pyridoxal phosphate)lysine. Thr350 contacts substrate.

This sequence belongs to the class-II pyridoxal-phosphate-dependent aminotransferase family. BioF subfamily. As to quaternary structure, homodimer. Pyridoxal 5'-phosphate is required as a cofactor.

It catalyses the reaction 6-carboxyhexanoyl-[ACP] + L-alanine + H(+) = (8S)-8-amino-7-oxononanoate + holo-[ACP] + CO2. It participates in cofactor biosynthesis; biotin biosynthesis. In terms of biological role, catalyzes the decarboxylative condensation of pimeloyl-[acyl-carrier protein] and L-alanine to produce 8-amino-7-oxononanoate (AON), [acyl-carrier protein], and carbon dioxide. In Buchnera aphidicola subsp. Baizongia pistaciae (strain Bp), this protein is 8-amino-7-oxononanoate synthase.